The following is a 389-amino-acid chain: Mannitol-1-phosphate 5-dehydrogenase (389 aa).

5–16 serves as a coordination point for NAD(+); it reads AIQFGGGNIGRG. The active site involves Lys214.

Belongs to the mannitol dehydrogenase family. Monomer.

The catalysed reaction is D-mannitol 1-phosphate + NAD(+) = beta-D-fructose 6-phosphate + NADH + H(+). In terms of biological role, catalyzes the NAD(H)-dependent interconversion of D-fructose 6-phosphate and D-mannitol 1-phosphate in the mannitol metabolic pathway. The sequence is that of Mannitol-1-phosphate 5-dehydrogenase from Talaromyces marneffei (strain ATCC 18224 / CBS 334.59 / QM 7333) (Penicillium marneffei).